The chain runs to 220 residues: Ribonuclease HII (220 aa).

Residues Pro16–Gln216 form the RNase H type-2 domain. A divalent metal cation is bound by residues Asp22, Glu23, and Asp114.

The protein belongs to the RNase HII family. Mn(2+) serves as cofactor. It depends on Mg(2+) as a cofactor.

The protein localises to the cytoplasm. It carries out the reaction Endonucleolytic cleavage to 5'-phosphomonoester.. In terms of biological role, endonuclease that specifically degrades the RNA of RNA-DNA hybrids. In Nitratidesulfovibrio vulgaris (strain ATCC 29579 / DSM 644 / CCUG 34227 / NCIMB 8303 / VKM B-1760 / Hildenborough) (Desulfovibrio vulgaris), this protein is Ribonuclease HII.